We begin with the raw amino-acid sequence, 231 residues long: NADH-ubiquinone oxidoreductase chain 4 (231 aa).

6 helical membrane-spanning segments follow: residues 1 to 21, 34 to 54, 63 to 85, 89 to 111, 128 to 148, and 169 to 189; these read PIAGSMVLAAILLKLGGYGII, MFLPFIVLALWGAILANLTCL, IAYSSISHMGLVVATIIIQTPWG, ALALMIAHGFTSSALFCLANTTY, ILPMATTWWLLANLMNIAIPP, and TIIMLGLSMLITASYSLHMFL.

Belongs to the complex I subunit 4 family.

It is found in the mitochondrion membrane. It carries out the reaction a ubiquinone + NADH + 5 H(+)(in) = a ubiquinol + NAD(+) + 4 H(+)(out). Core subunit of the mitochondrial membrane respiratory chain NADH dehydrogenase (Complex I) that is believed to belong to the minimal assembly required for catalysis. Complex I functions in the transfer of electrons from NADH to the respiratory chain. The immediate electron acceptor for the enzyme is believed to be ubiquinone. This chain is NADH-ubiquinone oxidoreductase chain 4 (MT-ND4), found in Bothrocophias hyoprora (Amazonian hognose viper).